The chain runs to 266 residues: Hemin import ATP-binding protein HmuV (266 aa).

Residues 2 to 242 (IEAVDICVQR…QNLRDVYSCS (241 aa)) form the ABC transporter domain. 34-41 (GPNGSGKS) contributes to the ATP binding site.

Belongs to the ABC transporter superfamily. Heme (hemin) importer (TC 3.A.1.14.5) family. In terms of assembly, the complex is composed of two ATP-binding proteins (HmuV), two transmembrane proteins (HmuU) and a solute-binding protein (HmuT).

It localises to the cell inner membrane. In terms of biological role, part of the ABC transporter complex HmuTUV involved in hemin import. Responsible for energy coupling to the transport system. The sequence is that of Hemin import ATP-binding protein HmuV from Bartonella henselae (strain ATCC 49882 / DSM 28221 / CCUG 30454 / Houston 1) (Rochalimaea henselae).